Consider the following 408-residue polypeptide: Gustatory receptor 10a (408 aa).

The Cytoplasmic segment spans residues 1-20 (MTSPDERKSFWERHEFKFYR). Residues 21-38 (YGHVYALIYGQVVIDYVP) traverse the membrane as a helical segment. Topologically, residues 39-48 (QRALKRGVKV) are extracellular. The helical transmembrane segment at 49 to 69 (LLIAYGHLFSMLLIVVLPGYF) threads the bilayer. Topologically, residues 70–86 (CYHFRTLTDTLDRRLQL) are cytoplasmic. The chain crosses the membrane as a helical span at residues 87-107 (LFYVSFTNTAIKYATVIVTYV). The Extracellular portion of the chain corresponds to 108 to 144 (ANTVHFEAINQRCTMQRTHLEFEFKNAPQEPKRPFEF). The chain crosses the membrane as a helical span at residues 145–165 (FMYFKFCLINLMMMIQVCGIF). Topologically, residues 166-270 (AQYGEVGKGS…RESFRMHQFQ (105 aa)) are cytoplasmic. A helical transmembrane segment spans residues 271 to 291 (LIGLMLSTLINNLTNFYTLFH). Residues 292–304 (MLAKQSLEEVSYP) are Extracellular-facing. Residues 305-325 (VVVGSVYATGFYIDTYIVALI) form a helical membrane-spanning segment. Topologically, residues 326–381 (NEHIKLELEAVALTMRRFAEPREMDERLTREIEHLSLELLNYQPPMLCGLLHLDRR) are cytoplasmic. A helical membrane pass occupies residues 382–402 (LVYLIAVTAFSYFITLVQFDL). At 403–408 (YLRKKS) the chain is on the extracellular side.

It belongs to the insect chemoreceptor superfamily. Gustatory receptor (GR) family. Gr10a subfamily. As to expression, expressed in the medial aspect of the third antennal segment, and in neurons of the terminal external chemosensory organ of larvae.

The protein resides in the cell membrane. Its function is as follows. Probable gustatory receptor which mediates acceptance or avoidance behavior, depending on its substrates. The protein is Gustatory receptor 10a (Gr10a) of Drosophila melanogaster (Fruit fly).